The primary structure comprises 593 residues: AT-rich interactive domain-containing protein 3A (593 aa).

Positions 14–222 (QQRARQELEA…PQLQPPDHGD (209 aa)) are disordered. The segment covering 41 to 53 (AAPDEDREPESAR) has biased composition (basic and acidic residues). Residues 54–87 (MQRAQMAALAAMRAAAAGLGHPASPGGSEDGPPG) are compositionally biased toward low complexity. Residues Ser-77, Ser-81, and Ser-88 each carry the phosphoserine modification. Thr-98 carries the phosphothreonine modification. A phosphoserine mark is found at Ser-101 and Ser-119. The span at 104-127 (RGREGPGEEHFEDMASDEDMKPKW) shows a compositional bias: basic and acidic residues. Positions 119 to 156 (SDEDMKPKWEEEEMEEDLGEDEEEEEEDYEDEEEEEDE) are acidic. Positions 128–158 (EEEEMEEDLGEDEEEEEEDYEDEEEEEDEEG) are enriched in acidic residues. The ARID domain occupies 238 to 330 (DPKRKEFLDD…YLYPYECEKR (93 aa)). A phosphoserine mark is found at Ser-353 and Ser-362. Residues Lys-398, Lys-399, Lys-452, and Lys-462 each participate in a glycyl lysine isopeptide (Lys-Gly) (interchain with G-Cter in SUMO2) cross-link. The region spanning 444 to 541 (AALEQLREKL…GVLFAQPPAP (98 aa)) is the REKLES domain. Positions 445–488 (ALEQLREKLESAEPPEKKMALVADEQQRLMQRALQQNFLAMAAQ) are important for nuclear localization. Positions 490–513 (PMSIRINSQASESRQDSAVNLTGT) are homodimerization. Disordered regions lie at residues 497-516 (SQASESRQDSAVNLTGTNGS) and 539-593 (PAPT…NSLP). Residues 537–557 (QPPAPTPTSAPNKGGGGGGGS) are important for cytoplasmic localization. The segment covering 549–576 (KGGGGGGGSSSNAGGRGGNTGTSGGQAG) has biased composition (gly residues). Over residues 580 to 593 (LSTPSTSTSNNSLP) the composition is skewed to low complexity.

Homodimer. Heterodimer with ARID3B. Interacts with E2F1. Interacts with GTF2I and BTK. Widely expressed, with highest expression in skeletal muscle, thalamus, and colon.

The protein resides in the nucleus. The protein localises to the cytoplasm. In terms of biological role, transcription factor which may be involved in the control of cell cycle progression by the RB1/E2F1 pathway and in B-cell differentiation. This chain is AT-rich interactive domain-containing protein 3A (ARID3A), found in Homo sapiens (Human).